The sequence spans 20 residues: 23 kDa cell wall protein (20 aa).

It is found in the secreted. Its subcellular location is the cell wall. The protein is 23 kDa cell wall protein of Arabidopsis thaliana (Mouse-ear cress).